The sequence spans 189 residues: dCTP deaminase (189 aa).

DCTP contacts are provided by residues 112-117, 136-138, Gln-157, Tyr-171, and Gln-181; these read KSTYAR and TLE. Catalysis depends on Glu-138, which acts as the Proton donor/acceptor.

This sequence belongs to the dCTP deaminase family. In terms of assembly, homotrimer.

The enzyme catalyses dCTP + H2O + H(+) = dUTP + NH4(+). The protein operates within pyrimidine metabolism; dUMP biosynthesis; dUMP from dCTP (dUTP route): step 1/2. In terms of biological role, catalyzes the deamination of dCTP to dUTP. The chain is dCTP deaminase from Alcanivorax borkumensis (strain ATCC 700651 / DSM 11573 / NCIMB 13689 / SK2).